Here is a 195-residue protein sequence, read N- to C-terminus: Molybdenum cofactor guanylyltransferase (195 aa).

GTP-binding positions include 10–12 (LAG), K23, N51, D69, and D99. Mg(2+) is bound at residue D99.

Belongs to the MobA family. As to quaternary structure, monomer. It depends on Mg(2+) as a cofactor.

The protein resides in the cytoplasm. It carries out the reaction Mo-molybdopterin + GTP + H(+) = Mo-molybdopterin guanine dinucleotide + diphosphate. In terms of biological role, transfers a GMP moiety from GTP to Mo-molybdopterin (Mo-MPT) cofactor (Moco or molybdenum cofactor) to form Mo-molybdopterin guanine dinucleotide (Mo-MGD) cofactor. The polypeptide is Molybdenum cofactor guanylyltransferase (Yersinia pseudotuberculosis serotype O:1b (strain IP 31758)).